The chain runs to 409 residues: uncharacterized protein (409 aa).

Positions 305 to 409 (LTKIDEKVVK…LIGEDDELEM (105 aa)) constitute an HTH arsR-type domain.

This is an uncharacterized protein from Methanocaldococcus jannaschii (strain ATCC 43067 / DSM 2661 / JAL-1 / JCM 10045 / NBRC 100440) (Methanococcus jannaschii).